A 156-amino-acid chain; its full sequence is Probable cyclic pyranopterin monophosphate synthase (156 aa).

Residues 74–76 (LCH) and 110–111 (ME) contribute to the substrate site. Aspartate 125 is an active-site residue.

The protein belongs to the MoaC family. Homohexamer; trimer of dimers.

It carries out the reaction (8S)-3',8-cyclo-7,8-dihydroguanosine 5'-triphosphate = cyclic pyranopterin phosphate + diphosphate. Its pathway is cofactor biosynthesis; molybdopterin biosynthesis. Functionally, catalyzes the conversion of (8S)-3',8-cyclo-7,8-dihydroguanosine 5'-triphosphate to cyclic pyranopterin monophosphate (cPMP). The sequence is that of Probable cyclic pyranopterin monophosphate synthase from Thermococcus onnurineus (strain NA1).